The primary structure comprises 209 residues: Kynurenine formamidase (209 aa).

Trp-20 provides a ligand contact to substrate. The Zn(2+) site is built by His-50, His-54, and Asp-56. Catalysis depends on His-60, which acts as the Proton donor/acceptor. Zn(2+) is bound by residues His-161 and Glu-173.

The protein belongs to the Cyclase 1 superfamily. KynB family. Homodimer. It depends on Zn(2+) as a cofactor.

It carries out the reaction N-formyl-L-kynurenine + H2O = L-kynurenine + formate + H(+). It functions in the pathway amino-acid degradation; L-tryptophan degradation via kynurenine pathway; L-kynurenine from L-tryptophan: step 2/2. Its function is as follows. Catalyzes the hydrolysis of N-formyl-L-kynurenine to L-kynurenine, the second step in the kynurenine pathway of tryptophan degradation. This chain is Kynurenine formamidase, found in Bacillus thuringiensis subsp. konkukian (strain 97-27).